The chain runs to 508 residues: Small ribosomal subunit protein mS47 (508 aa).

Belongs to the enoyl-CoA hydratase/isomerase family. Mitochondrion-specific ribosomal protein mS47 subfamily. In terms of assembly, component of the mitochondrial small ribosomal subunit (mt-SSU). Mature N.crassa 74S mitochondrial ribosomes consist of a small (37S) and a large (54S) subunit. The 37S small subunit contains a 16S ribosomal RNA (16S mt-rRNA) and 32 different proteins. The 54S large subunit contains a 23S rRNA (23S mt-rRNA) and 42 different proteins. mS47 forms a protuberance of the N.crassa mitoribosome and retains a solvent-exposed cavity liekly capable of accommodating a substrate, in accordance with it being an active enzyme as well as an integral constituent of the mitoribosome.

It is found in the mitochondrion. The enzyme catalyses 3-hydroxy-2-methylpropanoyl-CoA + H2O = 3-hydroxy-2-methylpropanoate + CoA + H(+). Component of the mitochondrial ribosome (mitoribosome), a dedicated translation machinery responsible for the synthesis of mitochondrial genome-encoded proteins, including at least some of the essential transmembrane subunits of the mitochondrial respiratory chain. The mitoribosomes are attached to the mitochondrial inner membrane and translation products are cotranslationally integrated into the membrane. mS47 has enzymatic activity in vitro, and is able to catalyze the specific hydrolysis of 3-hydroxyisobutyryl-CoA (HIBYL-CoA). However, because the turnover rate of mS47 is only a fraction of that of the homologous mammalian enzyme, the physiological function of this activity remains unclear. In Neurospora crassa (strain ATCC 24698 / 74-OR23-1A / CBS 708.71 / DSM 1257 / FGSC 987), this protein is Small ribosomal subunit protein mS47 (ehd3).